A 288-amino-acid chain; its full sequence is Small ribosomal subunit biogenesis GTPase RsgA (288 aa).

One can recognise a CP-type G domain in the interval 61 to 218 (TNKLIRPPVS…IVDTPGFSSL (158 aa)). Residues 110–113 (NKID) and 161–169 (GPSGVGKST) each bind GTP. Residues Cys-242, Cys-247, His-249, and Cys-255 each contribute to the Zn(2+) site.

This sequence belongs to the TRAFAC class YlqF/YawG GTPase family. RsgA subfamily. In terms of assembly, monomer. Associates with 30S ribosomal subunit, binds 16S rRNA. Requires Zn(2+) as cofactor.

The protein resides in the cytoplasm. Its function is as follows. One of several proteins that assist in the late maturation steps of the functional core of the 30S ribosomal subunit. Helps release RbfA from mature subunits. May play a role in the assembly of ribosomal proteins into the subunit. Circularly permuted GTPase that catalyzes slow GTP hydrolysis, GTPase activity is stimulated by the 30S ribosomal subunit. The polypeptide is Small ribosomal subunit biogenesis GTPase RsgA (Clostridium acetobutylicum (strain ATCC 824 / DSM 792 / JCM 1419 / IAM 19013 / LMG 5710 / NBRC 13948 / NRRL B-527 / VKM B-1787 / 2291 / W)).